The chain runs to 262 residues: tRNA pseudouridine synthase A (262 aa).

Catalysis depends on aspartate 51, which acts as the Nucleophile. A substrate-binding site is contributed by tyrosine 109.

Belongs to the tRNA pseudouridine synthase TruA family. In terms of assembly, homodimer.

The enzyme catalyses uridine(38/39/40) in tRNA = pseudouridine(38/39/40) in tRNA. Formation of pseudouridine at positions 38, 39 and 40 in the anticodon stem and loop of transfer RNAs. This is tRNA pseudouridine synthase A from Dechloromonas aromatica (strain RCB).